A 142-amino-acid polypeptide reads, in one-letter code: Large ribosomal subunit protein uL22c (142 aa).

Belongs to the universal ribosomal protein uL22 family. As to quaternary structure, part of the 50S ribosomal subunit.

It localises to the plastid. Its subcellular location is the chloroplast. This protein binds specifically to 23S rRNA. In terms of biological role, the globular domain of the protein is located near the polypeptide exit tunnel on the outside of the subunit, while an extended beta-hairpin is found that lines the wall of the exit tunnel in the center of the 70S ribosome. The polypeptide is Large ribosomal subunit protein uL22c (rpl22) (Ceratophyllum demersum (Rigid hornwort)).